Consider the following 171-residue polypeptide: CASP-like protein 1C3 (171 aa).

Topologically, residues 1–6 (MVKPKR) are cytoplasmic. A helical membrane pass occupies residues 7–27 (LLSLLLRLIAFGATLAAVIIM). Residues 28-52 (ATSHEKGSFFALSYEAKYSDTPAFK) are Extracellular-facing. The helical transmembrane segment at 53-73 (YFVIANAIVTVYGFLALFIPS) threads the bilayer. Topologically, residues 74–79 (ESPLWR) are cytoplasmic. A helical transmembrane segment spans residues 80-100 (LVLALDLVFTMLLISSISAAL). The Extracellular segment spans residues 101-130 (AVAQVGKKGNSSAGWLPVCGQVTKYCNQVT). N-linked (GlcNAc...) asparagine glycosylation is present at N110. Residues 131-151 (GALVAGFIAIITYIILLLYSI) form a helical membrane-spanning segment. The Cytoplasmic segment spans residues 152 to 171 (YTFLNSLLGKTPCRLSSPGI).

This sequence belongs to the Casparian strip membrane proteins (CASP) family. As to quaternary structure, homodimer and heterodimers.

It is found in the cell membrane. The sequence is that of CASP-like protein 1C3 from Populus trichocarpa (Western balsam poplar).